Reading from the N-terminus, the 332-residue chain is 2-hydroxyacid dehydrogenase homolog 2 (332 aa).

Residues 154-155 (KI), 233-235 (TSR), and Asp259 each bind NAD(+). The active site involves Arg235. Glu264 is a catalytic residue. Residue His296 is the Proton donor of the active site. 296-299 (HQAF) provides a ligand contact to NAD(+).

The protein belongs to the D-isomer specific 2-hydroxyacid dehydrogenase family.

It is found in the cytoplasm. The protein localises to the nucleus. The chain is 2-hydroxyacid dehydrogenase homolog 2 from Schizosaccharomyces pombe (strain 972 / ATCC 24843) (Fission yeast).